A 245-amino-acid polypeptide reads, in one-letter code: MKRFMAIVSYDGTNFCGFQVQKDVRTVQGMFEQALERILKQRVITIAAGRTDTGVHANGQIVCFDCYLDIDEESMKNAMNANLPDDIYVRKVVEVDKNFHPRFDAKRRIYHYLIYNSQEPNLFIRNYAWWFPYKLNICKMREAAKFFEGEHDFRSFMKSGDHRENTVRTIYRVRVLQLRGGIILIRVEGRSFLRRMVRNMVGALVKVGVGEWKPEDISRVLELKDRSKAAVTAPPHGLYLYAVDF.

The active-site Nucleophile is the aspartate 52. A substrate-binding site is contributed by tyrosine 110.

Belongs to the tRNA pseudouridine synthase TruA family. As to quaternary structure, homodimer.

It catalyses the reaction uridine(38/39/40) in tRNA = pseudouridine(38/39/40) in tRNA. In terms of biological role, formation of pseudouridine at positions 38, 39 and 40 in the anticodon stem and loop of transfer RNAs. In Pseudothermotoga lettingae (strain ATCC BAA-301 / DSM 14385 / NBRC 107922 / TMO) (Thermotoga lettingae), this protein is tRNA pseudouridine synthase A.